The following is a 496-amino-acid chain: Cytochrome P450 3A56 (496 aa).

Cys441 contacts heme.

This sequence belongs to the cytochrome P450 family. It depends on heme as a cofactor. As to expression, highly expressed in liver and intestine. Moderate expression in gill and spleen. Low expression in kidney, brain and heart.

The protein localises to the endoplasmic reticulum membrane. It is found in the microsome membrane. The catalysed reaction is an organic molecule + reduced [NADPH--hemoprotein reductase] + O2 = an alcohol + oxidized [NADPH--hemoprotein reductase] + H2O + H(+). Functionally, putative steroid 6-beta-hydroxylase. This chain is Cytochrome P450 3A56 (cyp3a56), found in Fundulus heteroclitus (Killifish).